A 650-amino-acid polypeptide reads, in one-letter code: Amyloid beta precursor like protein 1 (650 aa).

The first 38 residues, 1-38, serve as a signal peptide directing secretion; the sequence is MGPASPAARGLSRRPGQPPLPLLLPLLLLLLRAQPAIG. The Extracellular segment spans residues 39-580; the sequence is SLAGGSPGAA…APAGTGVSRE (542 aa). Residues 50–146 form a GFLD subdomain region; that stretch reads APGSAQVAGL…PFRCLPGEFV (97 aa). Residues 50 to 212 form the E1 domain; it reads APGSAQVAGL…RGVEYVCCPP (163 aa). 6 cysteine pairs are disulfide-bonded: cysteine 60–cysteine 84, cysteine 95–cysteine 140, cysteine 120–cysteine 128, cysteine 156–cysteine 210, cysteine 167–cysteine 197, and cysteine 181–cysteine 209. The segment at 154 to 212 is cuBD subdomain; the sequence is EGCRFLHQERMDQCESSTRRHQEAQEACSSQGLILHGSGMLLPCGSDRFRGVEYVCCPP. Position 174 (histidine 174) interacts with Cu(2+). Positions 206, 209, and 210 each coordinate Zn(2+). The tract at residues 214 to 287 is disordered; sequence GTPDPSGTAV…LAVVGKVTPT (74 aa). O-linked (GalNAc...) threonine glycosylation occurs at threonine 215. Residue serine 227 is glycosylated (O-linked (GalNAc...) serine). The O-linked (GalNAc...) threonine glycan is linked to threonine 228. Residues 285–305 form an O-glycosylated at three sites region; it reads TPTPRPTDGVDIYFGMPGEIS. The E2 domain maps to 293 to 484; sequence GVDIYFGMPG…QELRPQIQEL (192 aa). Heparin-binding stretches follow at residues 310–342 and 410–441; these read FLRA…SKNL and LLAL…DPEK. Asparagine 337 carries N-linked (GlcNAc...) asparagine glycosylation. The tract at residues 442-459 is collagen-binding; the sequence is AQQMRFQVHTHLQVIEER. N-linked (GlcNAc...) asparagine glycosylation occurs at asparagine 461. The disordered stretch occupies residues 492–546; sequence PSELEAPAPGGSSEDKGGLQPPDSKDDTPMTLPKGSTEQDAASPEKEKMNPLEQY. 2 stretches are compositionally biased toward basic and acidic residues: residues 504 to 519 and 534 to 546; these read SEDK…KDDT and SPEK…LEQY. Asparagine 551 carries N-linked (GlcNAc...) asparagine glycosylation. Histidine 561 lines the Cu(2+) pocket. Histidine 561 serves as a coordination point for Zn(2+). Residues 581–603 traverse the membrane as a helical segment; the sequence is AVSGLLIMGAGGGSLIVLSMLLL. The Basolateral sorting signal motif lies at 604 to 615; it reads RRKKPYGAISHG. The Cytoplasmic portion of the chain corresponds to 604 to 650; the sequence is RRKKPYGAISHGVVEVDPMLTLEEQQLRELQRHGYENPTYRFLEERP. Positions 632–649 are interaction with DAB1; sequence ELQRHGYENPTYRFLEER. Positions 636–650 are interaction with DAB2; that stretch reads HGYENPTYRFLEERP. The Clathrin-binding motif lies at 640–643; sequence NPTY. The NPXY motif; contains endocytosis signal signature appears at 640–643; sequence NPTY.

Belongs to the APP family. Monomer and homodimer. Heparin binding promotes homodimerization. Binds, via its C-terminus, to the PID domain of several cytoplasmic proteins, including APBB and APBA family members, MAPK8IP1 and DAB1. Binding to Dab1 inhibits its serine phosphorylation. Interacts with CPEB1. Interacts (via NPXY motif) with DAB2 (via PID domain); the interaction is impaired by tyrosine phosphorylation of the NPXY motif. Interacts (via NPXY motif) with DAB1. In terms of processing, proteolytically cleaved by caspases during neuronal apoptosis. Cleaved, in vitro, at Asp-620 by caspase-3. Post-translationally, N- and O-glycosylated. O-glycosylation with core 1 or possibly core 8 glycans. Glycosylation on Ser-227 is the preferred site to Thr-228. In terms of tissue distribution, expressed in the cerebral cortex where it is localized to the postsynaptic density (PSD).

The protein localises to the cell membrane. It localises to the cytoplasm. Its function is as follows. May play a role in postsynaptic function. The C-terminal gamma-secretase processed fragment, ALID1, activates transcription activation through APBB1 (Fe65) binding. Couples to JIP signal transduction through C-terminal binding. May interact with cellular G-protein signaling pathways. Can regulate neurite outgrowth through binding to components of the extracellular matrix such as heparin and collagen I. The gamma-CTF peptide, C30, is a potent enhancer of neuronal apoptosis. The polypeptide is Amyloid beta precursor like protein 1 (APLP1) (Homo sapiens (Human)).